Here is a 312-residue protein sequence, read N- to C-terminus: MDRMDSSDEEIDNISDDELQSGDEIEVESSNSPLRLNYILGNEIGRGAFSIVREATSRATGTKVAIKSINTRFIKNKLLMREIEIMKKVGDHPNILKLYEVYETTKHLHLVLELVTGGELFDKIVQRGEYSEQDASKIVRQIVSAVGHLHANGIAHRDLKPQNLLCAGEEGDDIRVADFGLSKIFGDGDYLETCCGSPEYVAPEVLECKPYDKACDLWSVGVITYVLLTGCFPFWDKNNAVLYEKIRNVDYGWPEGLEVSNEAKDLVSHLIEKNPEKRFTFEQCLIHPWVTGEGVSNARKIKPFQQQQPNNR.

The interval 1 to 28 is disordered; it reads MDRMDSSDEEIDNISDDELQSGDEIEVE. Over residues 7-27 the composition is skewed to acidic residues; that stretch reads SDEEIDNISDDELQSGDEIEV. Residues 38 to 290 enclose the Protein kinase domain; sequence YILGNEIGRG…FEQCLIHPWV (253 aa). ATP is bound by residues 44–52 and Lys-67; that span reads IGRGAFSIV. The active-site Proton acceptor is the Asp-158.

The protein belongs to the protein kinase superfamily. CAMK Ser/Thr protein kinase family. CaMK subfamily.

It catalyses the reaction L-seryl-[myosin light chain] + ATP = O-phospho-L-seryl-[myosin light chain] + ADP + H(+). It carries out the reaction L-threonyl-[myosin light chain] + ATP = O-phospho-L-threonyl-[myosin light chain] + ADP + H(+). Its activity is regulated as follows. Does not have a calmodulin-binding domain. Functionally, may phosphorylate a specific serine in the N-terminus of a myosin light chain. The polypeptide is Probable myosin light chain kinase DDB_G0282429 (Dictyostelium discoideum (Social amoeba)).